Reading from the N-terminus, the 999-residue chain is Lysosomal alpha-mannosidase (999 aa).

Residues 1-25 form a disordered region; the sequence is MVGDARPSGVRAGGCRGAVGSRTSS. The N-terminal stretch at 1–50 is a signal peptide; it reads MVGDARPSGVRAGGCRGAVGSRTSSRALRPPLPPLSSLFVLFLAAPCAWA. 2 residues coordinate Zn(2+): His73 and Asp75. A glycan (N-linked (GlcNAc...) asparagine) is linked at Asn134. Residue Asp197 participates in Zn(2+) binding. Asp197 (nucleophile) is an active-site residue. The cysteines at positions 269 and 274 are disulfide-linked. A glycan (N-linked (GlcNAc...) asparagine) is linked at Asn369. Residue His448 participates in Zn(2+) binding. The cysteines at positions 495 and 503 are disulfide-linked. An N-linked (GlcNAc...) asparagine glycan is attached at Asn499. Positions 591–621 are excised as a propeptide; it reads SRDLVIQNEYLRARFDPNTGLLMELENLEQN. N-linked (GlcNAc...) asparagine glycosylation is found at Asn634, Asn640, Asn681, Asn755, and Asn919.

Belongs to the glycosyl hydrolase 38 family. Homodimer. Requires Zn(2+) as cofactor. Processed into 5 peptides of 35/38 kDa (A), 11/13 kDa (B) and 22 kDa (C), 38 kDa (D) and 13/15 kDa (E). The A, B and C peptides are disulfide-linked into a 67 kDa complex. Post-translationally, heavily glycosylated. Some sugar chains are of the high-mannose type.

The protein resides in the lysosome. The enzyme catalyses Hydrolysis of terminal, non-reducing alpha-D-mannose residues in alpha-D-mannosides.. Functionally, necessary for the catabolism of N-linked carbohydrates released during glycoprotein turnover. The chain is Lysosomal alpha-mannosidase (MAN2B1) from Bos taurus (Bovine).